Consider the following 767-residue polypeptide: Cation/H(+) antiporter 27 (767 aa).

11 consecutive transmembrane segments (helical) span residues 39–59, 63–83, 99–119, 135–155, 173–193, 205–225, 242–262, 280–300, 323–343, 371–391, and 415–435; these read LPLL…FQFL, FGKF…PSVI, VYII…ITTC, INGI…AILI, HVAI…LSSL, LASM…NIAI, VLQM…MLWM, ICVL…PYFF, IGCF…GLNI, IALP…VGFI, and KSFG…IVIV.

Belongs to the monovalent cation:proton antiporter 2 (CPA2) transporter (TC 2.A.37) family. CHX (TC 2.A.37.4) subfamily. As to expression, specifically expressed in pollen.

Its subcellular location is the membrane. In terms of biological role, may operate as a cation/H(+) antiporter. This chain is Cation/H(+) antiporter 27 (CHX27), found in Arabidopsis thaliana (Mouse-ear cress).